Here is a 227-residue protein sequence, read N- to C-terminus: UPF0688 protein C1orf174 homolog (227 aa).

Disordered stretches follow at residues 1 to 122 and 207 to 227; these read MRKR…VSDL and AKEE…EGNI. Basic and acidic residues predominate over residues 47–63; that stretch reads TEKESSKKLRKDEKGPV. Polar residues-rich tracts occupy residues 77 to 104 and 113 to 122; these read AASN…NGTR and RLPSSPVSDL.

Belongs to the UPF0688 family.

The protein resides in the nucleus. This Xenopus tropicalis (Western clawed frog) protein is UPF0688 protein C1orf174 homolog.